Reading from the N-terminus, the 118-residue chain is MYKTTGLTHLINSTKYSLQGLKSAFKNETAFRHECFLACILIPLTFFLGETKIEIILMISSVLLVMALELLNSAVETVVDRIGTERHELSGRAKDQGSASVFIALCIVGIVWGGILFF.

Glu-28 is an a divalent metal cation binding site. The next 2 helical transmembrane spans lie at 29-49 (TAFRHECFLACILIPLTFFLG) and 55-75 (IILMISSVLLVMALELLNSAV). Glu-69 acts as the Proton acceptor in catalysis. Glu-76 serves as a coordination point for a divalent metal cation. A helical membrane pass occupies residues 98 to 118 (SASVFIALCIVGIVWGGILFF).

The protein belongs to the bacterial diacylglycerol kinase family. The cofactor is Mg(2+).

The protein localises to the cell inner membrane. It carries out the reaction a 1,2-diacyl-sn-glycerol + ATP = a 1,2-diacyl-sn-glycero-3-phosphate + ADP + H(+). Catalyzes the ATP-dependent phosphorylation of sn-l,2-diacylglycerol (DAG) to phosphatidic acid. Involved in the recycling of diacylglycerol produced as a by-product during membrane-derived oligosaccharide (MDO) biosynthesis. The sequence is that of Diacylglycerol kinase (dgkA) from Haemophilus influenzae (strain ATCC 51907 / DSM 11121 / KW20 / Rd).